Reading from the N-terminus, the 198-residue chain is Ribonuclease HII (198 aa).

Positions His-10–Ser-198 constitute an RNase H type-2 domain. 3 residues coordinate a divalent metal cation: Asp-16, Glu-17, and Asp-108.

The protein belongs to the RNase HII family. Mn(2+) is required as a cofactor. The cofactor is Mg(2+).

The protein localises to the cytoplasm. It catalyses the reaction Endonucleolytic cleavage to 5'-phosphomonoester.. Functionally, endonuclease that specifically degrades the RNA of RNA-DNA hybrids. The protein is Ribonuclease HII of Salmonella arizonae (strain ATCC BAA-731 / CDC346-86 / RSK2980).